The following is a 510-amino-acid chain: Dentin matrix acidic phosphoprotein 1 (510 aa).

The signal sequence occupies residues Met1–Ala16. The tract at residues Gln23–Tyr510 is disordered. Acidic residues-rich tracts occupy residues Gln61–Gly77 and Asn101–Gly119. Basic and acidic residues-rich tracts occupy residues Pro123–Gly180, Arg273–Thr288, and Pro299–Glu328. A compositionally biased stretch (polar residues) spans Val333–Glu343. The N-linked (GlcNAc...) asparagine glycan is linked to Asn351. Over residues Glu358–Asn367 the composition is skewed to basic and acidic residues. The Cell attachment site signature appears at Arg364–Asp366. Asn370 carries N-linked (GlcNAc...) asparagine glycosylation. A compositionally biased stretch (basic and acidic residues) spans Ser407–Glu417. Asn427 and Asn464 each carry an N-linked (GlcNAc...) asparagine glycan. Residues Thr481–Gly499 are compositionally biased toward basic and acidic residues. Acidic residues predominate over residues Asp500–Tyr510.

Interacts with importin alpha. Phosphorylated in the cytosol and extracellular matrix and unphosphorylated in the nucleus. Phosphorylation is necessary for nucleocytoplasmic transport and may be catalyzed by a nuclear isoform of CK2 and can be augmented by calcium. Phosphorylated (in vitro) by FAM20C in the extracellular medium at sites within the S-x-E/pS motif. Expressed in fetal brain, bone and tooth particularly in odontoblast, but not in ameloblast. Not expressed in liver and skin.

The protein resides in the nucleus. It localises to the cytoplasm. The protein localises to the secreted. Its subcellular location is the extracellular space. It is found in the extracellular matrix. In terms of biological role, may have a dual function during osteoblast differentiation. In the nucleus of undifferentiated osteoblasts, unphosphorylated form acts as a transcriptional component for activation of osteoblast-specific genes like osteocalcin. During the osteoblast to osteocyte transition phase it is phosphorylated and exported into the extracellular matrix, where it regulates nucleation of hydroxyapatite. This Bos taurus (Bovine) protein is Dentin matrix acidic phosphoprotein 1 (DMP1).